The sequence spans 1612 residues: Mediator of RNA polymerase II transcription subunit 12 (1612 aa).

Disordered stretches follow at residues 18 to 114 (AVYS…PSLS) and 1514 to 1547 (PVSI…QPAF). Residues 66-80 (VLEREPPAKRLKIDV) show a composition bias toward basic and acidic residues. Composition is skewed to low complexity over residues 99–114 (SKST…PSLS) and 1518–1538 (PSPA…PTGG).

It belongs to the Mediator complex subunit 12 family. As to quaternary structure, component of the srb8-11 complex, which itself associates with the Mediator complex.

The protein localises to the nucleus. Functionally, component of the srb8-11 complex. The srb8-11 complex is a regulatory module of the Mediator complex which is itself involved in regulation of basal and activated RNA polymerase II-dependent transcription. The srb8-11 complex may be involved in the transcriptional repression of a subset of genes regulated by Mediator. It may inhibit the association of the Mediator complex with RNA polymerase II to form the holoenzyme complex. This Neosartorya fischeri (strain ATCC 1020 / DSM 3700 / CBS 544.65 / FGSC A1164 / JCM 1740 / NRRL 181 / WB 181) (Aspergillus fischerianus) protein is Mediator of RNA polymerase II transcription subunit 12 (srb8).